Here is a 52-residue protein sequence, read N- to C-terminus: Transmembrane protein ORF52 (52 aa).

The next 2 helical transmembrane spans lie at 11–31 and 32–52; these read AFLG…EIIT and FMAL…GLFV.

It is found in the host membrane. In Acidianus filamentous virus 1 (isolate United States/Yellowstone) (AFV-1), this protein is Transmembrane protein ORF52.